We begin with the raw amino-acid sequence, 293 residues long: Ribosomal protein L11 methyltransferase (293 aa).

S-adenosyl-L-methionine is bound by residues threonine 145, glycine 166, aspartate 188, and asparagine 229.

This sequence belongs to the methyltransferase superfamily. PrmA family.

The protein localises to the cytoplasm. The enzyme catalyses L-lysyl-[protein] + 3 S-adenosyl-L-methionine = N(6),N(6),N(6)-trimethyl-L-lysyl-[protein] + 3 S-adenosyl-L-homocysteine + 3 H(+). Its function is as follows. Methylates ribosomal protein L11. The polypeptide is Ribosomal protein L11 methyltransferase (Idiomarina loihiensis (strain ATCC BAA-735 / DSM 15497 / L2-TR)).